The chain runs to 241 residues: DNA repair protein RecO (241 aa).

The protein belongs to the RecO family.

Its function is as follows. Involved in DNA repair and RecF pathway recombination. The protein is DNA repair protein RecO of Phocaeicola vulgatus (strain ATCC 8482 / DSM 1447 / JCM 5826 / CCUG 4940 / NBRC 14291 / NCTC 11154) (Bacteroides vulgatus).